Reading from the N-terminus, the 337-residue chain is GDP-mannose transporter 1 (337 aa).

Residues 1 to 16 (MSELKTGHAGHNPWAS) lie on the Cytoplasmic side of the membrane. A helical transmembrane segment spans residues 17 to 37 (VANSGPISILSYCGSSILMTV). Residues 38–51 (TNKFVVNLKDFNMN) are Lumenal-facing. The chain crosses the membrane as a helical span at residues 52 to 72 (FVMLFVQSLVCTITLIILRIL). Residues 73 to 92 (GYAKFRSLNKTDAKNWFPIS) are Cytoplasmic-facing. A helical membrane pass occupies residues 93-113 (FLLVLMIYTSSKALQYLAVPI). Residues 114-119 (YTIFKN) are Lumenal-facing. The N-linked (GlcNAc...) asparagine glycan is linked to Asn-119. A helical membrane pass occupies residues 120-140 (LTIILIAYGEVLFFGGSVTSM). At 141–144 (ELSS) the chain is on the cytoplasmic side. A helical membrane pass occupies residues 145–165 (FLLMVLSSVVATWGDQQAVAA). The Lumenal segment spans residues 166–180 (KAASLAEGAAGAVAS). Residues 181–201 (FNPGYFWMFTNCITSALFVLI) form a helical membrane-spanning segment. Over 202 to 215 (MRKRIKLTNFKDFD) the chain is Cytoplasmic. A helical membrane pass occupies residues 216 to 236 (TMFYNNVLALPILLLFSFCVE). The Lumenal portion of the chain corresponds to 237-252 (DWSSVNLTNNFSNDSL). Residues Asn-242, Asn-246, and Asn-249 are each glycosylated (N-linked (GlcNAc...) asparagine). A helical transmembrane segment spans residues 253 to 273 (TAMIISGVASVGISYCSGWCV). Over 274 to 279 (RVTSST) the chain is Cytoplasmic. Residues 280-300 (TYSMVGALNKLPIALSGLIFF) traverse the membrane as a helical segment. Residues 301 to 304 (DAPR) lie on the Lumenal side of the membrane. The chain crosses the membrane as a helical span at residues 305 to 325 (NFLSILSIFIGFLSGIIYAVA). The Cytoplasmic segment spans residues 326–337 (KQKKQQAQPLRK).

The protein belongs to the TPT transporter family. SLC35D subfamily. In terms of assembly, homooligomer.

It localises to the golgi apparatus membrane. Its subcellular location is the cytoplasmic vesicle membrane. It is found in the endoplasmic reticulum membrane. In terms of biological role, involved in the import of GDP-mannose from the cytoplasm into the Golgi lumen. Defective copy causes severe glycosylation defect and abnormal retention of soluble endoplasmic reticulum proteins. Involved in vanadate sensitivity. The polypeptide is GDP-mannose transporter 1 (VRG4) (Saccharomyces cerevisiae (strain YJM789) (Baker's yeast)).